The chain runs to 85 residues: Small ribosomal subunit protein uS17 (85 aa).

The protein belongs to the universal ribosomal protein uS17 family. Part of the 30S ribosomal subunit.

One of the primary rRNA binding proteins, it binds specifically to the 5'-end of 16S ribosomal RNA. In Haemophilus influenzae (strain 86-028NP), this protein is Small ribosomal subunit protein uS17.